The primary structure comprises 514 residues: Alpha-amylase (514 aa).

The N-terminal stretch at 1–31 is a signal peptide; that stretch reads MIQKRKRTVSFRLVLMCTLLFVSLPITKTSA. Residues Asn-133, Asp-190, Ala-212, Asp-214, Asp-225, Asp-231, Asp-233, and Asp-235 each coordinate Ca(2+). Na(+) is bound at residue Asp-190. Residues Asp-214, Asp-225, and Asp-231 each coordinate Na(+). Asp-262 functions as the Nucleophile in the catalytic mechanism. His-266 contributes to the Ca(2+) binding site. Glu-292 serves as the catalytic Proton donor. The Ca(2+) site is built by Gly-331, Asp-438, and Asp-461.

It belongs to the glycosyl hydrolase 13 family. As to quaternary structure, monomer. Ca(2+) is required as a cofactor. The cofactor is Na(+).

It is found in the secreted. The catalysed reaction is Endohydrolysis of (1-&gt;4)-alpha-D-glucosidic linkages in polysaccharides containing three or more (1-&gt;4)-alpha-linked D-glucose units.. The chain is Alpha-amylase from Bacillus amyloliquefaciens (Bacillus velezensis).